The chain runs to 339 residues: Phenylalanine--tRNA ligase alpha subunit (339 aa).

Glutamate 254 is a binding site for Mg(2+).

This sequence belongs to the class-II aminoacyl-tRNA synthetase family. Phe-tRNA synthetase alpha subunit type 1 subfamily. Tetramer of two alpha and two beta subunits. Mg(2+) serves as cofactor.

It localises to the cytoplasm. The enzyme catalyses tRNA(Phe) + L-phenylalanine + ATP = L-phenylalanyl-tRNA(Phe) + AMP + diphosphate + H(+). The sequence is that of Phenylalanine--tRNA ligase alpha subunit from Dictyoglomus thermophilum (strain ATCC 35947 / DSM 3960 / H-6-12).